A 142-amino-acid polypeptide reads, in one-letter code: Large ribosomal subunit protein uL13 (142 aa).

The protein belongs to the universal ribosomal protein uL13 family. As to quaternary structure, part of the 50S ribosomal subunit.

In terms of biological role, this protein is one of the early assembly proteins of the 50S ribosomal subunit, although it is not seen to bind rRNA by itself. It is important during the early stages of 50S assembly. This Aliivibrio salmonicida (strain LFI1238) (Vibrio salmonicida (strain LFI1238)) protein is Large ribosomal subunit protein uL13.